Consider the following 38-residue polypeptide: Histone H5 (38 aa).

The span at 1-15 (TESPIPVPAPAPAAK) shows a compositional bias: pro residues. The interval 1-38 (TESPIPVPAPAPAAKPKPKRVSKRPASHPPYSDMIAAA) is disordered. Residues 16–26 (PKPKRVSKRPA) show a composition bias toward basic residues.

Belongs to the histone H1/H5 family. As to expression, erythroid cells.

The protein localises to the nucleus. The protein resides in the chromosome. In terms of biological role, histone H5 performs the same function as H1, being necessary for the condensation of nucleosome chains into higher order structures, and replaces histone H1 in certain cells. This is Histone H5 from Columba livia (Rock dove).